The chain runs to 213 residues: Putative transmembrane protein DDB_G0267860 (213 aa).

The signal sequence occupies residues 1-22 (MKTKILLLNFIIIFFLINVNLA). The Extracellular segment spans residues 23–191 (IKKDSPFKEI…SSKFDSSTSS (169 aa)). N-linked (GlcNAc...) asparagine glycosylation is found at Asn-92 and Asn-114. Residues 192–212 (ISINTLAILSLLFLIFINKLI) traverse the membrane as a helical segment. Residue Asn-213 is a topological domain, cytoplasmic.

The protein resides in the membrane. This chain is Putative transmembrane protein DDB_G0267860, found in Dictyostelium discoideum (Social amoeba).